The sequence spans 429 residues: Glutamate-1-semialdehyde 2,1-aminomutase (429 aa).

N6-(pyridoxal phosphate)lysine is present on K268.

Belongs to the class-III pyridoxal-phosphate-dependent aminotransferase family. HemL subfamily. In terms of assembly, homodimer. Pyridoxal 5'-phosphate is required as a cofactor.

The protein resides in the cytoplasm. It carries out the reaction (S)-4-amino-5-oxopentanoate = 5-aminolevulinate. The protein operates within porphyrin-containing compound metabolism; protoporphyrin-IX biosynthesis; 5-aminolevulinate from L-glutamyl-tRNA(Glu): step 2/2. In Serratia proteamaculans (strain 568), this protein is Glutamate-1-semialdehyde 2,1-aminomutase.